Here is a 239-residue protein sequence, read N- to C-terminus: 4-hydroxy-tetrahydrodipicolinate reductase (239 aa).

NAD(+)-binding positions include 12–17 (GASGRM), 94–96 (GTT), and 118–121 (ASNF). Histidine 150 functions as the Proton donor/acceptor in the catalytic mechanism. Histidine 151 lines the (S)-2,3,4,5-tetrahydrodipicolinate pocket. Lysine 154 serves as the catalytic Proton donor. (S)-2,3,4,5-tetrahydrodipicolinate is bound at residue 160–161 (GT).

It belongs to the DapB family.

It is found in the cytoplasm. It catalyses the reaction (S)-2,3,4,5-tetrahydrodipicolinate + NAD(+) + H2O = (2S,4S)-4-hydroxy-2,3,4,5-tetrahydrodipicolinate + NADH + H(+). The enzyme catalyses (S)-2,3,4,5-tetrahydrodipicolinate + NADP(+) + H2O = (2S,4S)-4-hydroxy-2,3,4,5-tetrahydrodipicolinate + NADPH + H(+). It participates in amino-acid biosynthesis; L-lysine biosynthesis via DAP pathway; (S)-tetrahydrodipicolinate from L-aspartate: step 4/4. Catalyzes the conversion of 4-hydroxy-tetrahydrodipicolinate (HTPA) to tetrahydrodipicolinate. In Stenotrophomonas maltophilia (strain R551-3), this protein is 4-hydroxy-tetrahydrodipicolinate reductase.